A 337-amino-acid chain; its full sequence is GTP 3',8-cyclase (337 aa).

The Radical SAM core domain occupies 17 to 242; the sequence is AFQRRYYYLR…QSKGLLDGPA (226 aa). Arg-26 provides a ligand contact to GTP. 2 residues coordinate [4Fe-4S] cluster: Cys-33 and Cys-37. Tyr-39 contributes to the S-adenosyl-L-methionine binding site. Cys-40 contacts [4Fe-4S] cluster. Arg-76 lines the GTP pocket. Gly-80 contacts S-adenosyl-L-methionine. Thr-107 provides a ligand contact to GTP. An S-adenosyl-L-methionine-binding site is contributed by Ser-131. Lys-168 is a GTP binding site. Met-202 serves as a coordination point for S-adenosyl-L-methionine. Positions 265 and 268 each coordinate [4Fe-4S] cluster. 270-272 provides a ligand contact to GTP; it reads RLR. Residue Cys-282 participates in [4Fe-4S] cluster binding.

This sequence belongs to the radical SAM superfamily. MoaA family. Monomer and homodimer. [4Fe-4S] cluster is required as a cofactor.

The enzyme catalyses GTP + AH2 + S-adenosyl-L-methionine = (8S)-3',8-cyclo-7,8-dihydroguanosine 5'-triphosphate + 5'-deoxyadenosine + L-methionine + A + H(+). It participates in cofactor biosynthesis; molybdopterin biosynthesis. In terms of biological role, catalyzes the cyclization of GTP to (8S)-3',8-cyclo-7,8-dihydroguanosine 5'-triphosphate. This chain is GTP 3',8-cyclase, found in Pasteurella multocida (strain Pm70).